The following is a 427-amino-acid chain: tRNA(Ile)-lysidine synthase (427 aa).

Ser-18–Ser-23 lines the ATP pocket.

This sequence belongs to the tRNA(Ile)-lysidine synthase family.

Its subcellular location is the cytoplasm. The enzyme catalyses cytidine(34) in tRNA(Ile2) + L-lysine + ATP = lysidine(34) in tRNA(Ile2) + AMP + diphosphate + H(+). In terms of biological role, ligates lysine onto the cytidine present at position 34 of the AUA codon-specific tRNA(Ile) that contains the anticodon CAU, in an ATP-dependent manner. Cytidine is converted to lysidine, thus changing the amino acid specificity of the tRNA from methionine to isoleucine. The chain is tRNA(Ile)-lysidine synthase from Pseudomonas putida (strain ATCC 47054 / DSM 6125 / CFBP 8728 / NCIMB 11950 / KT2440).